A 178-amino-acid polypeptide reads, in one-letter code: ATP-dependent protease subunit HslV (178 aa).

T7 is an active-site residue. Positions 162, 165, and 168 each coordinate Na(+).

Belongs to the peptidase T1B family. HslV subfamily. In terms of assembly, a double ring-shaped homohexamer of HslV is capped on each side by a ring-shaped HslU homohexamer. The assembly of the HslU/HslV complex is dependent on binding of ATP.

It is found in the cytoplasm. It catalyses the reaction ATP-dependent cleavage of peptide bonds with broad specificity.. Allosterically activated by HslU binding. Its function is as follows. Protease subunit of a proteasome-like degradation complex believed to be a general protein degrading machinery. The chain is ATP-dependent protease subunit HslV from Dechloromonas aromatica (strain RCB).